We begin with the raw amino-acid sequence, 462 residues long: Gastric inhibitory polypeptide receptor (462 aa).

Positions 1–18 are cleaved as a signal peptide; sequence MPLRPRLLLLCLWGLLLQ. The Extracellular segment spans residues 19–135; it reads QAETDSEGQT…DQRLILERLQ (117 aa). 3 disulfides stabilise this stretch: cysteine 43/cysteine 67, cysteine 58/cysteine 100, and cysteine 81/cysteine 115. Asparagine 59 and asparagine 74 each carry an N-linked (GlcNAc...) asparagine glycan. The chain crosses the membrane as a helical span at residues 136–158; the sequence is VVYTVGYSLSLGTLLLALLILSL. Residues 159-166 are Cytoplasmic-facing; sequence FRRLHCTR. The helical transmembrane segment at 167–186 threads the bilayer; it reads NYIHMNVFLSFMLRAVAILT. The Extracellular segment spans residues 187-214; sequence RDRLLPTLGPYPGDRTLTLRNQALAACR. Residues 215 to 239 traverse the membrane as a helical segment; it reads TAQIVTQYCVGANYTWLLVEGVYLH. At 240–251 the chain is on the cytoplasmic side; the sequence is HLLVIVGGSEKG. Residues 252–275 traverse the membrane as a helical segment; the sequence is HFRCYLLLGWGAPALFVIPWVIVR. Topologically, residues 276–290 are extracellular; that stretch reads YLLENTQCWERNEVK. A helical transmembrane segment spans residues 291 to 316; the sequence is AIWWIIRTPILITILINFFIFIRILG. The Cytoplasmic segment spans residues 317 to 338; that stretch reads ILVSKLRTRQMRCPDYRLRLAR. The chain crosses the membrane as a helical span at residues 339 to 359; it reads STLTLVPLLGVHEVVFAPVTE. Residues 360–374 are Extracellular-facing; the sequence is EQAEGTLRFAKLAFE. The chain crosses the membrane as a helical span at residues 375–395; that stretch reads IFLSSFQGFLVSVLYCFINKE. At 396-462 the chain is on the cytoplasmic side; that stretch reads VQSEIRRSWR…PGEEVLESYC (67 aa). The segment at 421–462 is disordered; sequence HAELGPQALPSRSAPREVPITGSTLPSGPLHGPGEEVLESYC.

This sequence belongs to the G-protein coupled receptor 2 family. In terms of assembly, may form homodimers and heterodimers with GLP1R. Post-translationally, N-glycosylation is required for cell surface expression and lengthens receptor half-life by preventing degradation in the ER. In terms of tissue distribution, widely distributed including pancreatic islets, brain and various peripheral tissues.

Its subcellular location is the cell membrane. Its function is as follows. This is a receptor for GIP. The activity of this receptor is mediated by G proteins which activate adenylyl cyclase. The sequence is that of Gastric inhibitory polypeptide receptor (GIPR) from Mesocricetus auratus (Golden hamster).